A 344-amino-acid chain; its full sequence is Hypoxia-inducible factor 1-alpha inhibitor (344 aa).

The residue at position 2 (A2) is an N-acetylalanine. The JmjC domain occupies 133–303 (GRVYLQQTLN…PKRIEYPLKA (171 aa)). Y136 lines the 2-oxoglutarate pocket. Residues D143 and 173–174 (LT) contribute to the substrate site. T187 is a binding site for 2-oxoglutarate. Residues H190 and D192 each coordinate Fe cation. 192-194 (DEQ) is a substrate binding site. Residues N196 and K205 each coordinate 2-oxoglutarate. Residue 229–230 (RQ) participates in substrate binding. H270 is a binding site for Fe cation. 2-oxoglutarate is bound at residue N285. Substrate is bound by residues A291 and N312.

As to quaternary structure, homodimer; homodimerization is essential for catalytic activity. It depends on Fe(2+) as a cofactor.

The protein resides in the nucleus. It localises to the cytoplasm. It is found in the perinuclear region. The catalysed reaction is L-asparaginyl-[hypoxia-inducible factor alpha subunit] + 2-oxoglutarate + O2 = (3S)-3-hydroxy-L-asparaginyl-[hypoxia-inducible factor alpha subunit] + succinate + CO2. The enzyme catalyses L-histidyl-[ankyrin-repeat domain protein] + 2-oxoglutarate + O2 = (3S)-3-hydroxy-L-histidyl-[ankyrin-repeat domain protein] + succinate + CO2. It catalyses the reaction L-asparaginyl-[ankyrin-repeat domain protein] + 2-oxoglutarate + O2 = (3S)-3-hydroxy-L-asparaginyl-[ankyrin-repeat domain protein] + succinate + CO2. It carries out the reaction L-aspartyl-[ankyrin-repeat domain protein] + 2-oxoglutarate + O2 = (3S)-3-hydroxy-L-aspartyl-[ankyrin-repeat domain protein] + succinate + CO2. Functionally, hydroxylates a specific Asn residue in the C-terminal transactivation domain (CAD) of HIF-1 alpha. The hydroxylation prevents interaction of HIF-1 with transcriptional coactivators. Also hydroxylates specific Asn, Asp and His residues within ankyrin repeat domain-containing proteins. This is Hypoxia-inducible factor 1-alpha inhibitor (hif1an) from Danio rerio (Zebrafish).